We begin with the raw amino-acid sequence, 229 residues long: Potassium/proton antiporter CemA (229 aa).

The next 3 helical transmembrane spans lie at 7-27 (LTPL…SLSF), 106-126 (IILH…FFIM), and 189-209 (IISG…KYWI).

It belongs to the CemA family.

Its subcellular location is the plastid. It is found in the chloroplast inner membrane. It catalyses the reaction K(+)(in) + H(+)(out) = K(+)(out) + H(+)(in). Functionally, contributes to K(+)/H(+) antiport activity by supporting proton efflux to control proton extrusion and homeostasis in chloroplasts in a light-dependent manner to modulate photosynthesis. Prevents excessive induction of non-photochemical quenching (NPQ) under continuous-light conditions. Indirectly promotes efficient inorganic carbon uptake into chloroplasts. The polypeptide is Potassium/proton antiporter CemA (Ceratophyllum demersum (Rigid hornwort)).